The primary structure comprises 183 residues: Holliday junction branch migration complex subunit RuvA (183 aa).

Residues 1–63 (MIVGLIGVVE…EDAHLLYGFL (63 aa)) form a domain I region. The segment at 64-139 (EESEKILFER…FFIQDENRPA (76 aa)) is domain II. Ala-139 is a region of interest (flexible linker). The interval 139 to 183 (ARNEVFLALESLGFKSAEINPVLKTLKPHLSIEAAIKEALQQLRS) is domain III.

Belongs to the RuvA family. Homotetramer. Forms an RuvA(8)-RuvB(12)-Holliday junction (HJ) complex. HJ DNA is sandwiched between 2 RuvA tetramers; dsDNA enters through RuvA and exits via RuvB. An RuvB hexamer assembles on each DNA strand where it exits the tetramer. Each RuvB hexamer is contacted by two RuvA subunits (via domain III) on 2 adjacent RuvB subunits; this complex drives branch migration. In the full resolvosome a probable DNA-RuvA(4)-RuvB(12)-RuvC(2) complex forms which resolves the HJ.

Its subcellular location is the cytoplasm. In terms of biological role, the RuvA-RuvB-RuvC complex processes Holliday junction (HJ) DNA during genetic recombination and DNA repair, while the RuvA-RuvB complex plays an important role in the rescue of blocked DNA replication forks via replication fork reversal (RFR). RuvA specifically binds to HJ cruciform DNA, conferring on it an open structure. The RuvB hexamer acts as an ATP-dependent pump, pulling dsDNA into and through the RuvAB complex. HJ branch migration allows RuvC to scan DNA until it finds its consensus sequence, where it cleaves and resolves the cruciform DNA. The protein is Holliday junction branch migration complex subunit RuvA of Helicobacter pylori (strain J99 / ATCC 700824) (Campylobacter pylori J99).